Consider the following 122-residue polypeptide: Large ribosomal subunit protein uL14 (122 aa).

It belongs to the universal ribosomal protein uL14 family. As to quaternary structure, part of the 50S ribosomal subunit. Forms a cluster with proteins L3 and L19. In the 70S ribosome, L14 and L19 interact and together make contacts with the 16S rRNA in bridges B5 and B8.

Binds to 23S rRNA. Forms part of two intersubunit bridges in the 70S ribosome. This is Large ribosomal subunit protein uL14 from Caldicellulosiruptor bescii (strain ATCC BAA-1888 / DSM 6725 / KCTC 15123 / Z-1320) (Anaerocellum thermophilum).